The following is a 196-amino-acid chain: Late protein I196L (196 aa).

2 tandem repeats follow at residues 28–48 and 49–70. The 3; approximate repeat unit spans residues 71–92; sequence SNYLTSAISTNISDKEEDTPFS.

It belongs to the asfivirus I196L family.

This is Late protein I196L from African swine fever virus (isolate Warthog/Namibia/Wart80/1980) (ASFV).